We begin with the raw amino-acid sequence, 391 residues long: Alanine racemase (391 aa).

K38 acts as the Proton acceptor; specific for D-alanine in catalysis. N6-(pyridoxal phosphate)lysine is present on K38. A substrate-binding site is contributed by R136. The active-site Proton acceptor; specific for L-alanine is the Y267. Substrate is bound at residue M315.

Belongs to the alanine racemase family. Pyridoxal 5'-phosphate serves as cofactor.

The catalysed reaction is L-alanine = D-alanine. Its pathway is amino-acid biosynthesis; D-alanine biosynthesis; D-alanine from L-alanine: step 1/1. Its function is as follows. Catalyzes the interconversion of L-alanine and D-alanine. May also act on other amino acids. The sequence is that of Alanine racemase (alr) from Clostridium kluyveri (strain ATCC 8527 / DSM 555 / NBRC 12016 / NCIMB 10680 / K1).